The chain runs to 582 residues: Protein alan shepard (582 aa).

The segment covering 1-12 has biased composition (pro residues); sequence MHPRYSPAPPPQ. The disordered stretch occupies residues 1 to 73; that stretch reads MHPRYSPAPP…AAPPTSRSAF (73 aa). Tyrosine 5 bears the Phosphotyrosine mark. The span at 13–24 shows a compositional bias: low complexity; it reads QQQQMGGPPHQQ. Gly residues predominate over residues 25–35; that stretch reads QGGGGGGGGSM. The segment covering 37–57 has biased composition (polar residues); the sequence is GPSNAQQLPPQIPRSQNYSNG. A compositionally biased stretch (low complexity) spans 58 to 72; the sequence is SSSSAAAAPPTSRSA. A phosphotyrosine mark is found at tyrosine 125 and tyrosine 142. The segment at 164 to 225 is disordered; sequence PATTTYGQRV…TVQNQNQQGG (62 aa). A compositionally biased stretch (low complexity) spans 178–225; the sequence is SPSNTNSSSSSNTGSQSGTLSTSLSNTTNTNTNMGPNGTVQNQNQQGG. RRM domains are found at residues 231 to 304 and 310 to 389; these read TNLY…MAKQ and TNLY…FADG. The disordered stretch occupies residues 555–582; the sequence is PMTDSEQASTAASPDEAYTQYPHQAAPK.

Functionally, has a role in the perception of gravity. This Drosophila erecta (Fruit fly) protein is Protein alan shepard.